A 20-amino-acid chain; its full sequence is FLGGLMKAFPALICAVTKKC.

A disulfide bridge links Cys14 with Cys20.

Expressed by the skin glands.

It is found in the secreted. In terms of biological role, antibacterial activity against Gram-positive bacterium S.aureus (MIC=17 uM) and Gram-negative bacterium E.coli (MIC=4 uM). Has activity against C.albicans (MIC=14 uM). The polypeptide is Ranalexin-1Ca (Lithobates clamitans (Green frog)).